A 750-amino-acid chain; its full sequence is Photosystem I P700 chlorophyll a apoprotein A1 (750 aa).

Transmembrane regions (helical) follow at residues 70–93 (VFSAHFGQLSIIFLWLSGMYFHGA), 156–179 (LYCTAIGALIFAALMLFAGWFHYH), 195–219 (LNHHLAGLLGLGSLSWAGHQVHVSL), 291–309 (IAHHHLAIAILFLIAGHMY), 346–369 (WHAQLSLNLAMLGSLTIIVAHHMY), 385–411 (LSLFTHHMWIGGFLIVGAAAHAAIFMV), 433–455 (AIISHLNWACIFLGFHSFGLYIH), and 531–549 (FLVHHIHAFTIHVTVLILL). Positions 573 and 582 each coordinate [4Fe-4S] cluster. 2 consecutive transmembrane segments (helical) span residues 589–610 (HVFLGLFWMYNAISVVIFHFSW) and 664–686 (LSAYGLFFLGAHFVWAFSLMFLF). His-675 lines the chlorophyll a' pocket. Chlorophyll a contacts are provided by Met-683 and Tyr-691. Trp-692 contacts phylloquinone. Residues 724-744 (AVGVTHYLLGGIATTWAFFLA) traverse the membrane as a helical segment.

Belongs to the PsaA/PsaB family. In terms of assembly, the PsaA/B heterodimer binds the P700 chlorophyll special pair and subsequent electron acceptors. PSI consists of a core antenna complex that captures photons, and an electron transfer chain that converts photonic excitation into a charge separation. The eukaryotic PSI reaction center is composed of at least 11 subunits. P700 is a chlorophyll a/chlorophyll a' dimer, A0 is one or more chlorophyll a, A1 is one or both phylloquinones and FX is a shared 4Fe-4S iron-sulfur center. is required as a cofactor.

It localises to the plastid. The protein localises to the chloroplast thylakoid membrane. The enzyme catalyses reduced [plastocyanin] + hnu + oxidized [2Fe-2S]-[ferredoxin] = oxidized [plastocyanin] + reduced [2Fe-2S]-[ferredoxin]. PsaA and PsaB bind P700, the primary electron donor of photosystem I (PSI), as well as the electron acceptors A0, A1 and FX. PSI is a plastocyanin-ferredoxin oxidoreductase, converting photonic excitation into a charge separation, which transfers an electron from the donor P700 chlorophyll pair to the spectroscopically characterized acceptors A0, A1, FX, FA and FB in turn. Oxidized P700 is reduced on the lumenal side of the thylakoid membrane by plastocyanin. The chain is Photosystem I P700 chlorophyll a apoprotein A1 from Daucus carota (Wild carrot).